A 1775-amino-acid polypeptide reads, in one-letter code: Protein TIC 214 (1775 aa).

A run of 6 helical transmembrane segments spans residues 19 to 39, 68 to 88, 91 to 111, 133 to 153, 176 to 196, and 227 to 247; these read IINSVVVVGLYYGFLTTFSIG, FIAGQLMMFISIYYAPLHLAL, PHTITVLALPYLLFHFFWNNH, VFLNNLIFQLFNHFILPSSML, VGWLIGHILFMKWVGLVLVWI, and IFSILLFITCVYYLGRIPSPI. Residues 1491-1512 form a disordered region; that stretch reads KESAGQGERESDNEKKKNLESA.

Belongs to the TIC214 family. As to quaternary structure, part of the Tic complex.

The protein localises to the plastid. It is found in the chloroplast inner membrane. Functionally, involved in protein precursor import into chloroplasts. May be part of an intermediate translocation complex acting as a protein-conducting channel at the inner envelope. The sequence is that of Protein TIC 214 from Lobularia maritima (Sweet alyssum).